A 365-amino-acid polypeptide reads, in one-letter code: Inositol 4-methyltransferase (365 aa).

Asp-232 serves as a coordination point for S-adenosyl-L-methionine. The Proton acceptor role is filled by His-270.

This sequence belongs to the class I-like SAM-binding methyltransferase superfamily. Cation-independent O-methyltransferase family. As to expression, leaves and roots. The levels found in the leaves are 25 times greater than in the roots.

The enzyme catalyses myo-inositol + S-adenosyl-L-methionine = 1D-4-O-methyl-myo-inositol + S-adenosyl-L-homocysteine + H(+). Its pathway is polyol metabolism; myo-inositol metabolism. In terms of biological role, catalyzes the methylation of myo-inositol into ononitol (1D-4-O-methyl myo-inositol), the first step in the biosynthesis of the cyclic sugar pinitol which has osmoprotective properties. This chain is Inositol 4-methyltransferase (IMT1), found in Mesembryanthemum crystallinum (Common ice plant).